The primary structure comprises 595 residues: Tyrosine-protein phosphatase cdcA (595 aa).

The segment at 32–57 (TPFPYPAEQPKSPSKRRAQASPSKKR) is disordered. Basic residues predominate over residues 44-57 (PSKRRAQASPSKKR). In terms of domain architecture, Tyrosine-protein phosphatase spans 233–381 (LPSTVSEVRS…QGSFREWWFE (149 aa)). Cys322 (phosphocysteine intermediate) is an active-site residue. Residues 392–595 (QPNPVTPGRS…GSPVRVKAQA (204 aa)) are disordered. Basic residues predominate over residues 449–461 (RKSHRKDSRHHPY). The segment covering 471 to 483 (VDKDTRKTRRSTD) has biased composition (basic and acidic residues). The span at 502–526 (SKSPAASPGQRSISYSATVTASYTL) shows a compositional bias: polar residues.

Belongs to the protein-tyrosine phosphatase family. Non-receptor class CDC14 subfamily.

Its subcellular location is the nucleus. It is found in the cytoplasm. The protein resides in the cell septum. The enzyme catalyses O-phospho-L-tyrosyl-[protein] + H2O = L-tyrosyl-[protein] + phosphate. Protein phosphatase which antagonizes mitotic cyclin-dependent kinase nimX, the inactivation of which is essential for exit from mitosis. To access its substrates, is released from nucleolar sequestration during mitosis. Plays an essential in coordinating the nuclear division cycle with cytokinesis through the cytokinesis checkpoint. Involved in chromosome segregation, where it is required for meiosis I spindle dissambly as well as for establishing two consecutive chromosome segregation phases. Required for the transcription of the two major endoglucanase genes eglA and eglB and growth on synthetic cellulose as the sole carbon source. The chain is Tyrosine-protein phosphatase cdcA (cdcA) from Emericella nidulans (strain FGSC A4 / ATCC 38163 / CBS 112.46 / NRRL 194 / M139) (Aspergillus nidulans).